A 581-amino-acid chain; its full sequence is Protein LYRIC (581 aa).

The Lumenal segment spans residues 1-49 (MAARSWQDELAQQAEEGSARLRELLSVGLGFLRTELGLDLGLEPKRYPS). The interval 1 to 71 (MAARSWQDEL…LLLFLLGYGW (71 aa)) is activation of NF-kappa-B. A helical transmembrane segment spans residues 50–70 (WVILVGTGALGLLLLFLLGYG). The Cytoplasmic segment spans residues 71–581 (WAAACAGARK…KKKKKARRET (511 aa)). The interval 72-168 (AAACAGARKK…EKSKKNKKKS (97 aa)) is interaction with BCCIP. A disordered region spans residues 77-221 (GARKKRRSPP…DSGSLDSTIP (145 aa)). The interval 100 to 204 (EDPAQLKNLR…ISHREKRQQR (105 aa)) is interaction with RELA. Positions 108-126 (LRSEEQKKKNRKKLPEKPK) are enriched in basic and acidic residues. Thr-142 is subject to Phosphothreonine. Positions 159-168 (EKSKKNKKKS) are enriched in basic residues. Ser-179 carries the post-translational modification Phosphoserine. Residues 197 to 207 (HREKRQQRKRD) show a composition bias toward basic residues. Phosphoserine occurs at positions 215 and 250. Position 263 is an N6-acetyllysine (Lys-263). Residues 280–581 (VNGGGWSEKS…KKKKKARRET (302 aa)) are disordered. 3 positions are modified to phosphoserine: Ser-297, Ser-305, and Ser-310. The segment covering 318–331 (QSAWTQDPGDTNAN) has biased composition (polar residues). Residues Ser-343 and Ser-368 each carry the phosphoserine modification. Polar residues-rich tracts occupy residues 353–371 (EPVSQSTTSDYQWDGSRNQ) and 382–393 (NGLSSADPSSDW). The lung-homing for mammary tumors stretch occupies residues 380–442 (GLNGLSSADP…EGALPTGKSK (63 aa)). A phosphoserine mark is found at Ser-414 and Ser-425. Residues 421-433 (DQKDSDDDKEKGE) are compositionally biased toward basic and acidic residues. A compositionally biased stretch (basic residues) spans 440–450 (KSKKKKKKKKK). Ser-456, Ser-477, Ser-493, and Ser-495 each carry phosphoserine. 2 stretches are compositionally biased toward polar residues: residues 519–535 (PSVTLSKGDSDKSSSQV) and 548–567 (NAKQNSVPPSQTKSETNWES). Residue Ser-567 is modified to Phosphoserine. A compositionally biased stretch (basic residues) spans 570 to 581 (QIKKKKKARRET).

Interacts with BCCIP, CREBBP/CBP and RELA/p65. In terms of tissue distribution, widely expressed, with highest levels in liver, kidney, prostate and small intestine. Not detected in endothelial cells.

The protein resides in the endoplasmic reticulum membrane. Its subcellular location is the nucleus membrane. The protein localises to the cell junction. It localises to the tight junction. It is found in the nucleus. The protein resides in the nucleolus. Its subcellular location is the cytoplasm. The protein localises to the perinuclear region. Its function is as follows. Down-regulates SLC1A2/EAAT2 promoter activity when expressed ectopically. Activates the nuclear factor kappa-B (NF-kappa-B) transcription factor. Promotes anchorage-independent growth of immortalized melanocytes and astrocytes which is a key component in tumor cell expansion. Promotes lung metastasis and also has an effect on bone and brain metastasis, possibly by enhancing the seeding of tumor cells to the target organ endothelium. Induces chemoresistance. This is Protein LYRIC (Mtdh) from Rattus norvegicus (Rat).